Here is a 250-residue protein sequence, read N- to C-terminus: Pyrroloquinoline-quinone synthase (250 aa).

Belongs to the PqqC family.

The enzyme catalyses 6-(2-amino-2-carboxyethyl)-7,8-dioxo-1,2,3,4,7,8-hexahydroquinoline-2,4-dicarboxylate + 3 O2 = pyrroloquinoline quinone + 2 H2O2 + 2 H2O + H(+). Its pathway is cofactor biosynthesis; pyrroloquinoline quinone biosynthesis. Functionally, ring cyclization and eight-electron oxidation of 3a-(2-amino-2-carboxyethyl)-4,5-dioxo-4,5,6,7,8,9-hexahydroquinoline-7,9-dicarboxylic-acid to PQQ. This chain is Pyrroloquinoline-quinone synthase, found in Xanthomonas campestris pv. campestris (strain 8004).